We begin with the raw amino-acid sequence, 251 residues long: uncharacterized protein (251 aa).

Helical transmembrane passes span 22 to 42 (FLGV…DIVI), 86 to 106 (FFLS…VILA), 120 to 140 (LASS…AGIV), 157 to 177 (LGYF…IPYV), and 205 to 225 (IVAW…SFLA).

It is found in the cell membrane. This is an uncharacterized protein from Mycoplasma pneumoniae (strain ATCC 29342 / M129 / Subtype 1) (Mycoplasmoides pneumoniae).